The following is a 236-amino-acid chain: Putative N-acetylmannosamine-6-phosphate 2-epimerase (236 aa).

The protein belongs to the NanE family.

It carries out the reaction an N-acyl-D-glucosamine 6-phosphate = an N-acyl-D-mannosamine 6-phosphate. The protein operates within amino-sugar metabolism; N-acetylneuraminate degradation; D-fructose 6-phosphate from N-acetylneuraminate: step 3/5. Its function is as follows. Converts N-acetylmannosamine-6-phosphate (ManNAc-6-P) to N-acetylglucosamine-6-phosphate (GlcNAc-6-P). The protein is Putative N-acetylmannosamine-6-phosphate 2-epimerase of Listeria welshimeri serovar 6b (strain ATCC 35897 / DSM 20650 / CCUG 15529 / CIP 8149 / NCTC 11857 / SLCC 5334 / V8).